Here is a 164-residue protein sequence, read N- to C-terminus: MAEERDAEGTEALIAELHKKIKDAFEVFDHESNNTVDVREIGTIIRSLGCCPTEGELHDFIAEIEEEEPTGYIRFEKFIPVMTRALVERRYRPAAEDILLRAFEVLDPAKRGFLTKDELVKYMTEEGEPFSQEEMEEMLSAAIDPESNTINYRDYITMMVVDEN.

EF-hand domains follow at residues 16–51 (ELHKKIKDAFEVFDHESNNTVDVREIGTIIRSLGCC) and 94–129 (AAEDILLRAFEVLDPAKRGFLTKDELVKYMTEEGEP).

It belongs to the DRC8 family. Component of the nexin-dynein regulatory complex (N-DRC).

The protein localises to the cytoplasm. It localises to the cytoskeleton. It is found in the flagellum axoneme. In terms of biological role, component of the nexin-dynein regulatory complex (N-DRC), a key regulator of ciliary/flagellar motility which maintains the alignment and integrity of the distal axoneme and regulates microtubule sliding in motile axonemes. This chain is Dynein regulatory complex protein 8 (Efcab2), found in Mus musculus (Mouse).